The sequence spans 208 residues: Imidazoleglycerol-phosphate dehydratase (208 aa).

This sequence belongs to the imidazoleglycerol-phosphate dehydratase family.

It is found in the cytoplasm. It carries out the reaction D-erythro-1-(imidazol-4-yl)glycerol 3-phosphate = 3-(imidazol-4-yl)-2-oxopropyl phosphate + H2O. It functions in the pathway amino-acid biosynthesis; L-histidine biosynthesis; L-histidine from 5-phospho-alpha-D-ribose 1-diphosphate: step 6/9. The chain is Imidazoleglycerol-phosphate dehydratase from Psychrobacter sp. (strain PRwf-1).